We begin with the raw amino-acid sequence, 77 residues long: U8-lycotoxin-Ls1m (77 aa).

The first 20 residues, 1–20, serve as a signal peptide directing secretion; the sequence is MKLMIFTGLFLFAIVSLIEA. The propeptide occupies 21-26; sequence QAENEK.

It belongs to the neurotoxin 19 (CSTX) family. 08 (U8-Lctx) subfamily. In terms of processing, contains 4 disulfide bonds. As to expression, expressed by the venom gland.

Its subcellular location is the secreted. The chain is U8-lycotoxin-Ls1m from Lycosa singoriensis (Wolf spider).